Here is a 423-residue protein sequence, read N- to C-terminus: UDP-N-acetylglucosamine 1-carboxyvinyltransferase (423 aa).

Phosphoenolpyruvate is bound at residue 21-22 (KN). Arg-92 lines the UDP-N-acetyl-alpha-D-glucosamine pocket. Residue Cys-116 is the Proton donor of the active site. 2-(S-cysteinyl)pyruvic acid O-phosphothioketal is present on Cys-116. 2 residues coordinate UDP-N-acetyl-alpha-D-glucosamine: Asp-305 and Val-327.

This sequence belongs to the EPSP synthase family. MurA subfamily.

It localises to the cytoplasm. The catalysed reaction is phosphoenolpyruvate + UDP-N-acetyl-alpha-D-glucosamine = UDP-N-acetyl-3-O-(1-carboxyvinyl)-alpha-D-glucosamine + phosphate. It functions in the pathway cell wall biogenesis; peptidoglycan biosynthesis. Functionally, cell wall formation. Adds enolpyruvyl to UDP-N-acetylglucosamine. This chain is UDP-N-acetylglucosamine 1-carboxyvinyltransferase, found in Fervidobacterium nodosum (strain ATCC 35602 / DSM 5306 / Rt17-B1).